Consider the following 174-residue polypeptide: Nicotinamide-nucleotide adenylyltransferase (174 aa).

It belongs to the archaeal NMN adenylyltransferase family.

Its subcellular location is the cytoplasm. It carries out the reaction beta-nicotinamide D-ribonucleotide + ATP + H(+) = diphosphate + NAD(+). Its pathway is cofactor biosynthesis; NAD(+) biosynthesis; NAD(+) from nicotinamide D-ribonucleotide: step 1/1. This Archaeoglobus fulgidus (strain ATCC 49558 / DSM 4304 / JCM 9628 / NBRC 100126 / VC-16) protein is Nicotinamide-nucleotide adenylyltransferase.